We begin with the raw amino-acid sequence, 23 residues long: Acetylcholine receptor subunit gamma (23 aa).

It belongs to the ligand-gated ion channel (TC 1.A.9) family. Acetylcholine receptor (TC 1.A.9.1) subfamily. Gamma/CHRNG sub-subfamily. As to quaternary structure, pentamer of two alpha chains, and one each of the beta, delta, and gamma chains.

The protein resides in the postsynaptic cell membrane. Its subcellular location is the cell membrane. The catalysed reaction is K(+)(in) = K(+)(out). It catalyses the reaction Na(+)(in) = Na(+)(out). After binding acetylcholine, the AChR responds by an extensive change in conformation that affects all subunits and leads to opening of an ion-conducting channel across the plasma membrane. The polypeptide is Acetylcholine receptor subunit gamma (chrng) (Electrophorus electricus (Electric eel)).